We begin with the raw amino-acid sequence, 258 residues long: Spindlin-3 (258 aa).

A disordered region spans residues 1–23; the sequence is MKTPFGKAAAGQRSRTGAGHGSV. 3 tudor-like domain regions span residues 50 to 99, 129 to 178, and 210 to 255; these read VGCR…LELH, VGKA…YQLL, and VGKQ…YDLV. Histone H3K4me3 and H3R8me2a binding stretches follow at residues glutamate 138 and 246–248; that span reads DFH.

Belongs to the SPIN/STSY family. As to quaternary structure, interacts with C11orf84/SPINDOC.

In terms of biological role, exhibits H3K4me3-binding activity. This chain is Spindlin-3 (SPIN3), found in Homo sapiens (Human).